A 119-amino-acid polypeptide reads, in one-letter code: Cytochrome c55X (119 aa).

An N-terminal signal peptide occupies residues 1 to 20 (MNAPPDFRRAASHALWLALA). Positions 51, 54, and 55 each coordinate heme c.

Post-translationally, binds 1 heme c group covalently per subunit.

The protein resides in the periplasm. Monoheme c-type cytochrome. The sequence is that of Cytochrome c55X (nirC) from Pseudomonas aeruginosa (strain ATCC 15692 / DSM 22644 / CIP 104116 / JCM 14847 / LMG 12228 / 1C / PRS 101 / PAO1).